The following is a 208-amino-acid chain: Transcription factor atf-4 homolog (208 aa).

Disordered stretches follow at residues 18–47 (HNQT…YFNP) and 106–165 (ERRS…EKEE). Residues 110–120 (NSSASPASNWS) are compositionally biased toward low complexity. Residues 121–141 (SDEHDSQSEKSYHPYKTPEKK) are compositionally biased toward basic and acidic residues. The bZIP domain maps to 138–201 (PEKKERKKAQ…RYFKKFMTEM (64 aa)). Positions 140-163 (KKERKKAQNRLAATRYREKKRREK) are basic motif. The leucine-zipper stretch occupies residues 173–187 (LSVTNGKLKDQVSEL).

It belongs to the bZIP family.

Its subcellular location is the nucleus. Its function is as follows. Transcription factor. Involved in positively modulating longevity and stress tolerance, probably acting by positively regulating expression of transsulfuration enzyme cth-2, leading to increased hydrogen sulfide production and therefore increased protein persulfidation, a protective modification of redox-reactive cysteines. May mediate longevity and increased stress resistance induced by mTORC1 suppression. This chain is Transcription factor atf-4 homolog, found in Caenorhabditis elegans.